A 142-amino-acid chain; its full sequence is Hemoglobin subunit alpha (142 aa).

At Ser-1 the chain carries N-acetylserine. The Globin domain maps to 1 to 142; the sequence is SLSDKDKAVV…LALALSEKYR (142 aa). His-59 contributes to the O2 binding site. His-88 provides a ligand contact to heme b.

This sequence belongs to the globin family. In terms of assembly, heterotetramer of two alpha chains and two beta chains. In terms of tissue distribution, red blood cells.

Involved in oxygen transport from gills to the various peripheral tissues. This chain is Hemoglobin subunit alpha (hba), found in Carassius auratus (Goldfish).